Here is a 52-residue protein sequence, read N- to C-terminus: UPF0181 protein CGSHiGG_01050 (52 aa).

The protein belongs to the UPF0181 family.

This is UPF0181 protein CGSHiGG_01050 from Haemophilus influenzae (strain PittGG).